The sequence spans 310 residues: N-acetyl-gamma-glutamyl-phosphate reductase (310 aa).

Cysteine 117 is an active-site residue.

This sequence belongs to the NAGSA dehydrogenase family. Type 2 subfamily.

Its subcellular location is the cytoplasm. It carries out the reaction N-acetyl-L-glutamate 5-semialdehyde + phosphate + NADP(+) = N-acetyl-L-glutamyl 5-phosphate + NADPH + H(+). It functions in the pathway amino-acid biosynthesis; L-arginine biosynthesis; N(2)-acetyl-L-ornithine from L-glutamate: step 3/4. In terms of biological role, catalyzes the NADPH-dependent reduction of N-acetyl-5-glutamyl phosphate to yield N-acetyl-L-glutamate 5-semialdehyde. The protein is N-acetyl-gamma-glutamyl-phosphate reductase of Rhizobium etli (strain ATCC 51251 / DSM 11541 / JCM 21823 / NBRC 15573 / CFN 42).